The primary structure comprises 141 residues: uncharacterized protein (141 aa).

Residues 13 to 141 form the Ferritin-like diiron domain; sequence VTKGTELEKE…LKGILDRYFK (129 aa). Fe cation-binding residues include Glu63, His66, Glu125, and His128.

This is an uncharacterized protein from Methanocaldococcus jannaschii (strain ATCC 43067 / DSM 2661 / JAL-1 / JCM 10045 / NBRC 100440) (Methanococcus jannaschii).